A 131-amino-acid chain; its full sequence is Large ribosomal subunit protein bL19 (131 aa).

The protein belongs to the bacterial ribosomal protein bL19 family.

This protein is located at the 30S-50S ribosomal subunit interface and may play a role in the structure and function of the aminoacyl-tRNA binding site. The protein is Large ribosomal subunit protein bL19 of Afipia carboxidovorans (strain ATCC 49405 / DSM 1227 / KCTC 32145 / OM5) (Oligotropha carboxidovorans).